The chain runs to 906 residues: Aconitate hydratase A (906 aa).

Residues cysteine 443, cysteine 509, and cysteine 512 each coordinate [4Fe-4S] cluster.

This sequence belongs to the aconitase/IPM isomerase family. Monomer. The cofactor is [4Fe-4S] cluster.

The catalysed reaction is citrate = D-threo-isocitrate. The enzyme catalyses (2S,3R)-3-hydroxybutane-1,2,3-tricarboxylate = 2-methyl-cis-aconitate + H2O. It participates in carbohydrate metabolism; tricarboxylic acid cycle; isocitrate from oxaloacetate: step 2/2. Its pathway is organic acid metabolism; propanoate degradation. In terms of biological role, involved in the catabolism of short chain fatty acids (SCFA) via the tricarboxylic acid (TCA)(acetyl degradation route) and probably via the 2-methylcitrate cycle I (propionate degradation route). Catalyzes the reversible isomerization of citrate to isocitrate via cis-aconitate. Could catalyze the hydration of 2-methyl-cis-aconitate to yield (2R,3S)-2-methylisocitrate. The apo form of AcnA functions as a RNA-binding regulatory protein. This is Aconitate hydratase A from Bradyrhizobium diazoefficiens (strain JCM 10833 / BCRC 13528 / IAM 13628 / NBRC 14792 / USDA 110).